The following is a 298-amino-acid chain: Acetyl-coenzyme A carboxylase carboxyl transferase subunit beta (298 aa).

Residues 1–21 (MNQEVKSGKVLSPSTPWTQRP) are disordered. The C4-type zinc-finger motif lies at 20 to 67 (RPVPGIEVADEQQTLKATFTEPTIECPECHALVTRTAISFNAYVCPQC). Residues 41–298 (PTIECPECHA…RLVSKLMNLP (258 aa)) form the CoA carboxyltransferase N-terminal domain. 4 residues coordinate Zn(2+): cysteine 45, cysteine 48, cysteine 64, and cysteine 67.

Belongs to the AccD/PCCB family. In terms of assembly, acetyl-CoA carboxylase is a heterohexamer composed of biotin carboxyl carrier protein (AccB), biotin carboxylase (AccC) and two subunits each of ACCase subunit alpha (AccA) and ACCase subunit beta (AccD). Zn(2+) is required as a cofactor.

The protein resides in the cytoplasm. It carries out the reaction N(6)-carboxybiotinyl-L-lysyl-[protein] + acetyl-CoA = N(6)-biotinyl-L-lysyl-[protein] + malonyl-CoA. It participates in lipid metabolism; malonyl-CoA biosynthesis; malonyl-CoA from acetyl-CoA: step 1/1. In terms of biological role, component of the acetyl coenzyme A carboxylase (ACC) complex. Biotin carboxylase (BC) catalyzes the carboxylation of biotin on its carrier protein (BCCP) and then the CO(2) group is transferred by the transcarboxylase to acetyl-CoA to form malonyl-CoA. This is Acetyl-coenzyme A carboxylase carboxyl transferase subunit beta from Acinetobacter baumannii (strain SDF).